Consider the following 175-residue polypeptide: Protein OPG036 (175 aa).

Belongs to the poxviridae OPG036 family.

It is found in the host nucleus. Its function is as follows. Plays a role in the inhibition of host innate immune response. Within the host nucleus, inhibits activation of interferon-beta promoter by inhibiting IRF3 activation. In Bos taurus (Bovine), this protein is Protein OPG036 (OPG036).